Reading from the N-terminus, the 4036-residue chain is Hybrid PKS-NRPS synthetase iliA (4036 aa).

A Ketosynthase family 3 (KS3) domain is found at 7-439 (PEPIAVIGSA…GTNAHAIIES (433 aa)). Residues cysteine 181, histidine 318, and histidine 359 each act as for beta-ketoacyl synthase activity in the active site. Residues 561–886 (IFTGQGAQWP…LKRNGSDVEA (326 aa)) are malonyl-CoA:ACP transacylase (MAT) domain. The tract at residues 955–1092 (HELLGRRTPD…GDLVVHLGAD (138 aa)) is N-terminal hotdog fold. The segment at 955-1262 (HELLGRRTPD…ATNMVGEQDA (308 aa)) is dehydratase (DH) domain. Positions 955–1263 (HELLGRRTPD…TNMVGEQDAS (309 aa)) constitute a PKS/mFAS DH domain. Catalysis depends on histidine 987, which acts as the Proton acceptor; for dehydratase activity. Residues 1109–1263 (LVNIDGERVY…TNMVGEQDAS (155 aa)) form a C-terminal hotdog fold region. Aspartate 1168 acts as the Proton donor; for dehydratase activity in catalysis. The segment at 1402–1601 (EDDMLDRFYM…FSGADTVMHD (200 aa)) is methyltransferase (MT) domain. The interval 2136 to 2277 (KTYFMVGMAG…SVATVIGNIG (142 aa)) is ketoreductase (KR) domain. The Carrier 1 domain occupies 2425–2502 (EAVAAVVKAF…QVCTWATKKV (78 aa)). Serine 2462 carries the O-(pantetheine 4'-phosphoryl)serine modification. Disordered stretches follow at residues 2520 to 2583 (AEKT…KLGT) and 2597 to 2621 (DADARSESTGSSGMADSDDSSNRPE). Pro residues predominate over residues 2530-2540 (APAPDAAPAPA). Residues 2627-3054 (IMSQAQSRIW…HLDITECEIY (428 aa)) are condensation (C) domain. The segment at 3088 to 3485 (SLHSDKSAVK…GTLLCLGRLD (398 aa)) is adenylation (A) (KR) domain. Residues 3088–3485 (SLHSDKSAVK…GTLLCLGRLD (398 aa)) form a reductase (RED) domain region. Positions 3596–3675 (EKMTIREGEV…EMARRIDEHQ (80 aa)) constitute a Carrier 2 domain. The residue at position 3635 (serine 3635) is an O-(pantetheine 4'-phosphoryl)serine.

This sequence in the C-terminal section; belongs to the NRP synthetase family.

It carries out the reaction L-tyrosine + holo-[ACP] + 7 malonyl-CoA + acetyl-CoA + 8 AH2 + 2 S-adenosyl-L-methionine + ATP + 4 H(+) = N-[(4E,6E,10S,12Z,14E)-6,10-dimethyl-3-oxohexadeca-4,6,12,14-tetraenoyl]-L-tyrosyl-[ACP] + 8 A + AMP + 2 S-adenosyl-L-homocysteine + 7 CO2 + diphosphate + 8 CoA + 6 H2O. It participates in mycotoxin biosynthesis. In terms of biological role, hybrid PKS-NRPS synthetase; part of the gene cluster that mediates the biosynthesis of ilicicolin H, a 4-hydroxy-2-pyridonealkaloid that has potent and broad antifungal activities by inhibiting the mitochondrial respiration chain. IliA assembles the backbone of ilicicolin H. The PKS portion and trans-acting enoyl reductase iliB work together to construct an octaketide, and two methyl groups are introduced by the MT domain during the chain assembly. The nascent chain is then condensed with tyrosine, catalyzed by the C domain, and the resulting PKS-NRPS hybrid is offloaded by the RED domain to form an advanced tetramic acid intermediate. The biosynthesis of ilicicolin H starts with formation of the tetramic acid by the hybrid PKS-NRPS synthetase iliA with the partnering trans-enoyl reductase iliB since iliA lacks a designated enoylreductase (ER) domain. The cytochrome P450 monooxygenase iliC then catalyzes the ring expansion of the tetramate to the acyclic 2-pyridone. The pericyclase iliD further converts the acyclic 2-pyridone into 8-epi-ilicicolin H. 8-epi-ilicicolin H might then spontaneously convert to ilicicolin H, since ilicicolin H is produced in the absence of the epimerase iliE, in contrast to what was observed for the Talaromyces variabilis ilicolin H biosynthetic pathway. The chain is Hybrid PKS-NRPS synthetase iliA from Neonectria sp. (strain DH2).